A 799-amino-acid chain; its full sequence is DNA ligase (799 aa).

The segment covering 1–11 (MTEVKTGRVVD) has biased composition (basic and acidic residues). A disordered region spans residues 1-35 (MTEVKTGRVVDDAPVNDAPENNAAEATSPARHDAI). NAD(+)-binding positions include 67 to 71 (DAEYD), 116 to 117 (SL), and Asp147. The N6-AMP-lysine intermediate role is filled by Lys149. Residues Arg170, Glu207, Lys327, and Lys351 each contribute to the NAD(+) site. Zn(2+) is bound by residues Cys445, Cys448, Cys463, and Cys468. Residues 634 to 723 (AIVLPLQGLK…VASVDASEAV (90 aa)) enclose the BRCT domain. The tract at residues 720 to 799 (SEAVAEETPP…RGRAEQLKLF (80 aa)) is disordered. Low complexity predominate over residues 755–767 (GSASGDDSRGAAA). Positions 787–799 (DVPRGRAEQLKLF) are enriched in basic and acidic residues.

This sequence belongs to the NAD-dependent DNA ligase family. LigA subfamily. Mg(2+) serves as cofactor. Requires Mn(2+) as cofactor.

It carries out the reaction NAD(+) + (deoxyribonucleotide)n-3'-hydroxyl + 5'-phospho-(deoxyribonucleotide)m = (deoxyribonucleotide)n+m + AMP + beta-nicotinamide D-nucleotide.. Its function is as follows. DNA ligase that catalyzes the formation of phosphodiester linkages between 5'-phosphoryl and 3'-hydroxyl groups in double-stranded DNA using NAD as a coenzyme and as the energy source for the reaction. It is essential for DNA replication and repair of damaged DNA. The sequence is that of DNA ligase from Nitratidesulfovibrio vulgaris (strain ATCC 29579 / DSM 644 / CCUG 34227 / NCIMB 8303 / VKM B-1760 / Hildenborough) (Desulfovibrio vulgaris).